The chain runs to 201 residues: ATP-dependent Clp protease proteolytic subunit (201 aa).

The active-site Nucleophile is the Ser97. His122 is a catalytic residue.

Belongs to the peptidase S14 family. In terms of assembly, fourteen ClpP subunits assemble into 2 heptameric rings which stack back to back to give a disk-like structure with a central cavity, resembling the structure of eukaryotic proteasomes.

It localises to the cytoplasm. It carries out the reaction Hydrolysis of proteins to small peptides in the presence of ATP and magnesium. alpha-casein is the usual test substrate. In the absence of ATP, only oligopeptides shorter than five residues are hydrolyzed (such as succinyl-Leu-Tyr-|-NHMec, and Leu-Tyr-Leu-|-Tyr-Trp, in which cleavage of the -Tyr-|-Leu- and -Tyr-|-Trp bonds also occurs).. Its function is as follows. Cleaves peptides in various proteins in a process that requires ATP hydrolysis. Has a chymotrypsin-like activity. Plays a major role in the degradation of misfolded proteins. The sequence is that of ATP-dependent Clp protease proteolytic subunit from Nitratidesulfovibrio vulgaris (strain DSM 19637 / Miyazaki F) (Desulfovibrio vulgaris).